The chain runs to 523 residues: Lysine-specific demethylase 4D (523 aa).

The 43-residue stretch at 18–60 (IMIFHPTKEEFNDFDKYIAYMESQGAHRAGLAKIIPPKEWKAR) folds into the JmjN domain. PolyADP-ribosyl glutamic acid occurs at positions 26 and 27. Position 136 (Y136) interacts with 2-oxoglutarate. In terms of domain architecture, JmjC spans 146–312 (DENTKQWNLG…YGKMASQCSC (167 aa)). Fe cation is bound by residues H192 and E194. Residues N202 and K210 each coordinate 2-oxoglutarate. Positions 238 and 244 each coordinate Zn(2+). 2-oxoglutarate is bound at residue K245. Position 280 (H280) interacts with Fe cation. The Zn(2+) site is built by C310 and C312. Residues 407 to 523 (RRSAVSGTAT…ASGCSWAPVP (117 aa)) form a disordered region. The span at 428–440 (KPSSTPSSTPGPS) shows a compositional bias: low complexity. Positions 448-458 (NGRRGRGRPPQ) are enriched in basic residues.

Belongs to the JHDM3 histone demethylase family. It depends on Fe(2+) as a cofactor. In terms of processing, ubiquitinated via 'Lys-63'-linked ubiquitin chains. Deubiquitinated by USP14 with the help of TRIM14 leading to stabilization.

The protein resides in the nucleus. The catalysed reaction is N(6),N(6),N(6)-trimethyl-L-lysyl(9)-[histone H3] + 2 2-oxoglutarate + 2 O2 = N(6)-methyl-L-lysyl(9)-[histone H3] + 2 formaldehyde + 2 succinate + 2 CO2. In terms of biological role, histone demethylase that specifically demethylates 'Lys-9' of histone H3, thereby playing a central role in histone code. Does not demethylate histone H3 'Lys-4', H3 'Lys-27', H3 'Lys-36' nor H4 'Lys-20'. Demethylates both di- and trimethylated H3 'Lys-9' residue, while it has no activity on monomethylated residues. Demethylation of Lys residue generates formaldehyde and succinate. This chain is Lysine-specific demethylase 4D (KDM4D), found in Homo sapiens (Human).